A 360-amino-acid polypeptide reads, in one-letter code: UDP-N-acetylglucosamine--N-acetylmuramyl-(pentapeptide) pyrophosphoryl-undecaprenol N-acetylglucosamine transferase (360 aa).

UDP-N-acetyl-alpha-D-glucosamine contacts are provided by residues 12 to 14, serine 198, and glutamine 289; that span reads TAG.

It belongs to the glycosyltransferase 28 family. MurG subfamily.

The protein resides in the cell membrane. The enzyme catalyses Mur2Ac(oyl-L-Ala-gamma-D-Glu-L-Lys-D-Ala-D-Ala)-di-trans,octa-cis-undecaprenyl diphosphate + UDP-N-acetyl-alpha-D-glucosamine = beta-D-GlcNAc-(1-&gt;4)-Mur2Ac(oyl-L-Ala-gamma-D-Glu-L-Lys-D-Ala-D-Ala)-di-trans,octa-cis-undecaprenyl diphosphate + UDP + H(+). Its pathway is cell wall biogenesis; peptidoglycan biosynthesis. In terms of biological role, cell wall formation. Catalyzes the transfer of a GlcNAc subunit on undecaprenyl-pyrophosphoryl-MurNAc-pentapeptide (lipid intermediate I) to form undecaprenyl-pyrophosphoryl-MurNAc-(pentapeptide)GlcNAc (lipid intermediate II). This is UDP-N-acetylglucosamine--N-acetylmuramyl-(pentapeptide) pyrophosphoryl-undecaprenol N-acetylglucosamine transferase from Streptococcus equi subsp. equi (strain 4047).